A 46-amino-acid chain; its full sequence is Diuretic hormone class 1 (46 aa).

Residue I46 is modified to Isoleucine amide.

It is found in the secreted. Functionally, regulation of fluid secretion. Stimulates primary urine secretion by Malpighian tubules and causes a dose-dependent stimulation of cAMP levels in the tubules. Has a greater effect on the transport of Na(+) then K(+) ions. In vitro, has synergistic effects with the smaller diuretic hormone DH(31) which co-occurs with it. The polypeptide is Diuretic hormone class 1 (Diploptera punctata (Pacific beetle cockroach)).